The following is a 122-amino-acid chain: Large ribosomal subunit protein uL14 (122 aa).

It belongs to the universal ribosomal protein uL14 family. As to quaternary structure, part of the 50S ribosomal subunit. Forms a cluster with proteins L3 and L19. In the 70S ribosome, L14 and L19 interact and together make contacts with the 16S rRNA in bridges B5 and B8.

Binds to 23S rRNA. Forms part of two intersubunit bridges in the 70S ribosome. The chain is Large ribosomal subunit protein uL14 from Burkholderia vietnamiensis (strain G4 / LMG 22486) (Burkholderia cepacia (strain R1808)).